The chain runs to 331 residues: 6-phosphogluconolactonase (331 aa).

Residue Lys287 is modified to N6-acetyllysine.

It belongs to the cycloisomerase 2 family.

The catalysed reaction is 6-phospho-D-glucono-1,5-lactone + H2O = 6-phospho-D-gluconate + H(+). It participates in carbohydrate degradation; pentose phosphate pathway; D-ribulose 5-phosphate from D-glucose 6-phosphate (oxidative stage): step 2/3. In terms of biological role, catalyzes the hydrolysis of 6-phosphogluconolactone to 6-phosphogluconate. In Escherichia fergusonii (strain ATCC 35469 / DSM 13698 / CCUG 18766 / IAM 14443 / JCM 21226 / LMG 7866 / NBRC 102419 / NCTC 12128 / CDC 0568-73), this protein is 6-phosphogluconolactonase.